We begin with the raw amino-acid sequence, 58 residues long: uncharacterized protein (58 aa).

It to A.fulgidus AF2407.1.

This is an uncharacterized protein from Pyrococcus abyssi (strain GE5 / Orsay).